Reading from the N-terminus, the 781-residue chain is ATP-dependent RNA helicase rok1 (781 aa).

Disordered stretches follow at residues Leu-7–Leu-108 and Gln-134–Gln-177. A compositionally biased stretch (basic residues) spans Lys-48–Gly-57. A compositionally biased stretch (acidic residues) spans Ser-66–Asp-75. Composition is skewed to basic and acidic residues over residues Thr-84 to Leu-108 and Thr-139 to Gln-173. The Q motif signature appears at Glu-184–Met-212. Residues Asp-233–Arg-487 enclose the Helicase ATP-binding domain. Position 246-253 (Ala-246–Thr-253) interacts with ATP. The segment at Glu-323–Lys-386 is disordered. A compositionally biased stretch (acidic residues) spans Gln-339–Ser-369. Positions Asp-370–Lys-386 are enriched in basic and acidic residues. The DEAD box signature appears at Asp-434–Asp-437. The Helicase C-terminal domain maps to Ala-527–Val-689. A disordered region spans residues Arg-718 to Asp-781. Residues Ser-736–Ser-752 show a composition bias toward basic and acidic residues.

The protein belongs to the DEAD box helicase family. DDX52/ROK1 subfamily. Interacts with the U3 snoRNA and is associated with the 90S and 40S pre-ribosomes.

The protein resides in the nucleus. Its subcellular location is the nucleolus. The catalysed reaction is ATP + H2O = ADP + phosphate + H(+). In terms of biological role, ATP-dependent RNA helicase involved in 40S ribosomal subunit biogenesis. Required for the processing and cleavage of 35S pre-rRNA at sites A0, A1, and A2, leading to mature 18S rRNA. This is ATP-dependent RNA helicase rok1 (drh-16) from Neurospora crassa (strain ATCC 24698 / 74-OR23-1A / CBS 708.71 / DSM 1257 / FGSC 987).